A 184-amino-acid chain; its full sequence is Photosynthetic apparatus regulatory protein RegA (184 aa).

In terms of domain architecture, Response regulatory spans 14–128 (SLLLVDDDEP…EVTHALLAKG (115 aa)).

Phosphorylated by RegB.

Member of the two-component regulatory system RegB/RegA. Involved in transactivating anaerobic expression of the photosynthetic apparatus. It is a transcriptional regulator that is responsible for activating expression of the puf, puh, and puc operons in response to a decrease in oxygen tension. This is Photosynthetic apparatus regulatory protein RegA (regA) from Cereibacter sphaeroides (strain ATCC 17023 / DSM 158 / JCM 6121 / CCUG 31486 / LMG 2827 / NBRC 12203 / NCIMB 8253 / ATH 2.4.1.) (Rhodobacter sphaeroides).